Reading from the N-terminus, the 209-residue chain is Pyrrolidone-carboxylate peptidase (209 aa).

Catalysis depends on residues Glu-79, Cys-142, and His-164.

This sequence belongs to the peptidase C15 family. As to quaternary structure, homotetramer.

Its subcellular location is the cytoplasm. The enzyme catalyses Release of an N-terminal pyroglutamyl group from a polypeptide, the second amino acid generally not being Pro.. Functionally, removes 5-oxoproline from various penultimate amino acid residues except L-proline. The sequence is that of Pyrrolidone-carboxylate peptidase from Saccharolobus islandicus (strain Y.N.15.51 / Yellowstone #2) (Sulfolobus islandicus).